Reading from the N-terminus, the 204-residue chain is VEL1-related protein AC977.05c (204 aa).

The N-terminal stretch at 1 to 17 (MIFKNLISLFFIGLATA) is a signal peptide.

It belongs to the VEL1 family.

It localises to the cytoplasm. The protein localises to the cytosol. The chain is VEL1-related protein AC977.05c from Schizosaccharomyces pombe (strain 972 / ATCC 24843) (Fission yeast).